We begin with the raw amino-acid sequence, 150 residues long: Meiotically up-regulated gene 108 protein (150 aa).

Polar residues predominate over residues 1–11 (MANRFTSSDQT). The interval 1 to 150 (MANRFTSSDQ…RDISLLGSTI (150 aa)) is disordered. The segment covering 12–23 (QETHGHHVDKHS) has biased composition (basic and acidic residues). Positions 83-93 (NRSSQHTGRVN) are enriched in polar residues.

Its subcellular location is the cytoplasm. The protein resides in the nucleus. Functionally, has a role in meiosis. This chain is Meiotically up-regulated gene 108 protein (mug108), found in Schizosaccharomyces pombe (strain 972 / ATCC 24843) (Fission yeast).